The primary structure comprises 307 residues: Dioxygenase cdmD (307 aa).

3 residues coordinate Fe cation: His146, Asp148, and His226.

Belongs to the PhyH family. In terms of assembly, homodimer. Fe cation is required as a cofactor.

The catalysed reaction is verruculide A + 2-oxoglutarate + O2 = chrodrimanin T + succinate + CO2. It catalyses the reaction chrodrimanin E + 2-oxoglutarate + O2 = chrodrimanin A + succinate + CO2. Its pathway is secondary metabolite biosynthesis; terpenoid biosynthesis. Dioxygenase; part of the gene cluster that mediates the biosynthesis of chrodrimanin B, a meroterpenoid that acts as a potent blocker of insect GABA-gated chloride channels. The first step of the pathway is the biosynthesis of 6-hydroxymellein by the polyketide synthase cdmE. The prenyltransferase cdmH acts as a 6-hydroxymellein 5-farnesyltransferase and produces the hydrophobic metabolite verruculide C. The FAD-dependent monooxygenase cdmI further converts verruculide C into verruculide B. The terpene cyclase cdmG then produced the pentacyclic molecule 3-hydroxypentacecilide A, the backbone structure of chrodrimanin B, via folding the farnesyl moiety of the substrate into the chair-boat conformation. The short-chain dehydrogenase/reductase cdmF functions as the 3-OH dehydrogenase that oxidizes the C-3 hydroxyl group of 3-hydroxypentacecilide A and produces chrodrimanin C, the dehydrogenated product of 3-hydroxypentacecilide A. The cytochrome P450 monooxygenase cdmJ then accepts both 3-hydroxypentacecilide A and chrodrimanin C and functions as a C-7-beta-hydroxylase to produce respectively chrodrimanin H and chrodrimanin F. The dioxygenase cdmA accepts chrodrimanin H to afford chrodrimanin E, which is further transformed to chrodrimanin A by the dioxygenase cdmD. CdmA can also accept chrodrimanin C as substrate to convert it into verruculide A, which is further converted into chrodrimanin T by cdmD. The last step of the biosynthesis is proposed to be performed by the acetyltransferase cdmC which acetylates chrodrimanin A to yield chrodrimanin B. The pathway may also lead to the production of additional shunt products, including chrodrimanins T and U. The polypeptide is Dioxygenase cdmD (Talaromyces verruculosus (Penicillium verruculosum)).